The sequence spans 657 residues: Probable serine/threonine-protein kinase CA_C1728 (657 aa).

The Protein kinase domain maps to 10–274 (YKIEEEIGVG…ELSNVKNNYV (265 aa)). ATP-binding positions include 16-24 (IGVGGTAVV) and lysine 39. The Proton acceptor role is filled by aspartate 143. The disordered stretch occupies residues 286–334 (PAQIQNESNPNNKLDNDDTYYNGEPYNKEQPQEEPQEENEEPKNKIKGN). Positions 288–298 (QIQNESNPNNK) are enriched in polar residues. 3 PASTA domains span residues 375-441 (SVSK…DISS), 443-509 (DTDQ…VISR), and 512-577 (EVKK…VIGR). A disordered region spans residues 581–657 (TAVQPPNNNN…TNTPNGTGQK (77 aa)). Composition is skewed to low complexity over residues 584-600 (QPPN…QNQN), 613-637 (PTGG…PAGG), and 645-657 (GNVT…TGQK).

Belongs to the protein kinase superfamily. Ser/Thr protein kinase family.

It carries out the reaction L-seryl-[protein] + ATP = O-phospho-L-seryl-[protein] + ADP + H(+). The catalysed reaction is L-threonyl-[protein] + ATP = O-phospho-L-threonyl-[protein] + ADP + H(+). The polypeptide is Probable serine/threonine-protein kinase CA_C1728 (Clostridium acetobutylicum (strain ATCC 824 / DSM 792 / JCM 1419 / IAM 19013 / LMG 5710 / NBRC 13948 / NRRL B-527 / VKM B-1787 / 2291 / W)).